Here is a 200-residue protein sequence, read N- to C-terminus: MTPELITFGRYLAGEFENQRQAQAEPVWYVHLRLWLRPLPLFREDSIALFAEQASIINLDQPYRPRLWRLTHSESGGLEVRHYMFNDLKSVQGAGKNPDILRKISLEDLTFLPTCTLAVKVNTLADNQYQFIAQPQPEQRCQFTYEGTTYQVALGFEVTSHSLKTYDKGLDPGTGKGIWGALLGPYQYEKKRDFSAELDV.

It belongs to the CpcT/CpeT biliprotein lyase family.

Functionally, covalently attaches a chromophore to Cys residue(s) of phycobiliproteins. The sequence is that of Chromophore lyase CpcT/CpeT 2 from Microcystis aeruginosa (strain NIES-843 / IAM M-2473).